The following is a 45-amino-acid chain: Psychimicin (45 aa).

3 cysteine pairs are disulfide-bonded: Cys-10/Cys-24, Cys-14/Cys-36, and Cys-25/Cys-42.

In terms of assembly, monomer. In terms of tissue distribution, hemolymph.

The protein localises to the secreted. In terms of biological role, has antimicrobial activity. Is particularly active against fungi, and to a lesser extent against Gram-positive and Gram-negative bacteria. The polypeptide is Psychimicin (Oiketicus kirbyi (Bagworm moth)).